Consider the following 310-residue polypeptide: GMP synthase [glutamine-hydrolyzing] subunit B (310 aa).

The GMPS ATP-PPase domain occupies 1-187 (MSTSSYIDQI…LGLRTDLQPF (187 aa)). Residue 27–33 (SGGQDSS) coordinates ATP.

Heterodimer composed of a glutamine amidotransferase subunit (A) and a GMP-binding subunit (B).

It carries out the reaction XMP + L-glutamine + ATP + H2O = GMP + L-glutamate + AMP + diphosphate + 2 H(+). It functions in the pathway purine metabolism; GMP biosynthesis; GMP from XMP (L-Gln route): step 1/1. Catalyzes the synthesis of GMP from XMP. In Thermoplasma acidophilum (strain ATCC 25905 / DSM 1728 / JCM 9062 / NBRC 15155 / AMRC-C165), this protein is GMP synthase [glutamine-hydrolyzing] subunit B (guaAB).